Reading from the N-terminus, the 323-residue chain is Tetraacyldisaccharide 4'-kinase (323 aa).

56 to 63 (TVGGVGKT) contacts ATP.

This sequence belongs to the LpxK family.

It carries out the reaction a lipid A disaccharide + ATP = a lipid IVA + ADP + H(+). Its pathway is glycolipid biosynthesis; lipid IV(A) biosynthesis; lipid IV(A) from (3R)-3-hydroxytetradecanoyl-[acyl-carrier-protein] and UDP-N-acetyl-alpha-D-glucosamine: step 6/6. Its function is as follows. Transfers the gamma-phosphate of ATP to the 4'-position of a tetraacyldisaccharide 1-phosphate intermediate (termed DS-1-P) to form tetraacyldisaccharide 1,4'-bis-phosphate (lipid IVA). This is Tetraacyldisaccharide 4'-kinase from Legionella pneumophila (strain Corby).